A 799-amino-acid polypeptide reads, in one-letter code: Elongation factor G, mitochondrial (799 aa).

The transit peptide at 1–33 (MRSPSLARLQTRAVFGLTRSARFQPQTLLRQRC) directs the protein to the mitochondrion. Positions 97–384 (DKCRNIGIAA…GVIDYLPNPA (288 aa)) constitute a tr-type G domain. GTP contacts are provided by residues 106 to 113 (AHIDSGKT), 182 to 186 (DTPGH), and 236 to 239 (NKMD).

It belongs to the TRAFAC class translation factor GTPase superfamily. Classic translation factor GTPase family. EF-G/EF-2 subfamily.

The protein localises to the mitochondrion. The protein operates within protein biosynthesis; polypeptide chain elongation. Mitochondrial GTPase that catalyzes the GTP-dependent ribosomal translocation step during translation elongation. During this step, the ribosome changes from the pre-translocational (PRE) to the post-translocational (POST) state as the newly formed A-site-bound peptidyl-tRNA and P-site-bound deacylated tRNA move to the P and E sites, respectively. Catalyzes the coordinated movement of the two tRNA molecules, the mRNA and conformational changes in the ribosome. This Penicillium rubens (strain ATCC 28089 / DSM 1075 / NRRL 1951 / Wisconsin 54-1255) (Penicillium chrysogenum) protein is Elongation factor G, mitochondrial (mef1).